We begin with the raw amino-acid sequence, 476 residues long: MEFKEGLTFDDVLLVPKYSDITSRSQTDLTTKLSRNITINIPFVSANMDTVTESSMAVAMARAGGIGIIHRFLTIQEQANEVLKVKRSGSVMIENPYSISSDKSIQDALDYAEDKEISGLLVVDSNSKLVGIVTERDLLFAGSNGTIADVMTKDVVTAKPGVSLDEAKDILHKHRIEKLPIVDDSGIIQGLITSKDITNNTDYPNASKDKKGRPLVGAAVGVKGDFLERSESLLNAGADVLVVDIAHGHSENAISTVRNIKKAFPDCELIAGNIATAQGAEDLIKAGVDAVKVGVGSGSICITRVITGSGVPQLTAVMDCAKIGNDHGIPIISDGGTRTSGDATKALAAGASSVMVGSMLGGTDESPGTVLTKNGKRFKVYRGMASLAASIGRKSKETGSISLEDDLNDYVAEGVEAMVPYKGTVTDILKQLAGGVRSGLSYCGAHTIPQMQQNAEFIKMSRAGFAESQPHDVLLM.

CBS domains lie at 92–150 and 151–207; these read MIEN…IADV and MTKD…PNAS. NAD(+) contacts are provided by residues aspartate 244 and 294–296; that span reads GVG. K(+) contacts are provided by glycine 296 and glycine 298. An IMP-binding site is contributed by serine 299. A K(+)-binding site is contributed by cysteine 301. The active-site Thioimidate intermediate is cysteine 301. IMP is bound by residues 334–336, 357–358, 381–385, and glutamate 413; these read DGG, GS, and YRGMA. 2 residues coordinate K(+): glutamate 467 and serine 468.

This sequence belongs to the IMPDH/GMPR family. As to quaternary structure, homotetramer. Requires K(+) as cofactor.

It catalyses the reaction IMP + NAD(+) + H2O = XMP + NADH + H(+). It functions in the pathway purine metabolism; XMP biosynthesis via de novo pathway; XMP from IMP: step 1/1. Mycophenolic acid (MPA) is a non-competitive inhibitor that prevents formation of the closed enzyme conformation by binding to the same site as the amobile flap. In contrast, mizoribine monophosphate (MZP) is a competitive inhibitor that induces the closed conformation. MPA is a potent inhibitor of mammalian IMPDHs but a poor inhibitor of the bacterial enzymes. MZP is a more potent inhibitor of bacterial IMPDH. Its function is as follows. Catalyzes the conversion of inosine 5'-phosphate (IMP) to xanthosine 5'-phosphate (XMP), the first committed and rate-limiting step in the de novo synthesis of guanine nucleotides, and therefore plays an important role in the regulation of cell growth. The sequence is that of Inosine-5'-monophosphate dehydrogenase from Nitrosopumilus maritimus (strain SCM1).